Consider the following 213-residue polypeptide: Cytokinin riboside 5'-monophosphate phosphoribohydrolase LOG1 (213 aa).

Substrate is bound by residues Glu78, 96-97 (RK), 113-119 (GYGTLEE), and Thr125.

This sequence belongs to the LOG family. As to expression, expressed in roots and shoots. Detected in the vascular tissues of roots, cotyledons, leaves and pistils, in the shoot apical meristem and in immature flowers.

The protein resides in the cytoplasm. It is found in the nucleus. It carries out the reaction N(6)-(dimethylallyl)adenosine 5'-phosphate + H2O = N(6)-dimethylallyladenine + D-ribose 5-phosphate. The catalysed reaction is 9-ribosyl-trans-zeatin 5'-phosphate + H2O = trans-zeatin + D-ribose 5-phosphate. Functionally, cytokinin-activating enzyme working in the direct activation pathway. Phosphoribohydrolase that converts inactive cytokinin nucleotides to the biologically active free-base forms. The sequence is that of Cytokinin riboside 5'-monophosphate phosphoribohydrolase LOG1 (LOG1) from Arabidopsis thaliana (Mouse-ear cress).